The following is a 396-amino-acid chain: 1-deoxy-D-xylulose 5-phosphate reductoisomerase (396 aa).

Positions 10, 11, 12, 13, 38, and 124 each coordinate NADPH. A 1-deoxy-D-xylulose 5-phosphate-binding site is contributed by Lys-125. Glu-126 contributes to the NADPH binding site. Mn(2+) is bound at residue Asp-150. Residues Ser-151, Glu-152, Ser-179, and His-202 each contribute to the 1-deoxy-D-xylulose 5-phosphate site. Glu-152 is a binding site for Mn(2+). Gly-208 contributes to the NADPH binding site. Residues Ser-215, Asn-220, Lys-221, and Glu-224 each coordinate 1-deoxy-D-xylulose 5-phosphate. Position 224 (Glu-224) interacts with Mn(2+).

It belongs to the DXR family. It depends on Mg(2+) as a cofactor. The cofactor is Mn(2+).

It carries out the reaction 2-C-methyl-D-erythritol 4-phosphate + NADP(+) = 1-deoxy-D-xylulose 5-phosphate + NADPH + H(+). The protein operates within isoprenoid biosynthesis; isopentenyl diphosphate biosynthesis via DXP pathway; isopentenyl diphosphate from 1-deoxy-D-xylulose 5-phosphate: step 1/6. Its function is as follows. Catalyzes the NADPH-dependent rearrangement and reduction of 1-deoxy-D-xylulose-5-phosphate (DXP) to 2-C-methyl-D-erythritol 4-phosphate (MEP). This Ralstonia pickettii (strain 12J) protein is 1-deoxy-D-xylulose 5-phosphate reductoisomerase.